We begin with the raw amino-acid sequence, 430 residues long: Peptidoglycan DD-endopeptidase ShyA (430 aa).

The first 35 residues, 1–35 (MISKSIILRFSELSMRKKATLVGLPLLAVAAISSS), serve as a signal peptide directing secretion. Zn(2+) contacts are provided by His297, Asp301, and His378.

It belongs to the peptidase M23B family. Requires Zn(2+) as cofactor.

The protein localises to the periplasm. It functions in the pathway cell wall degradation; peptidoglycan degradation. Reduced activity in 0.5 mM EDTA and a complete loss of activity at higher EDTA concentrations. The effect of EDTA can be reversed by addition of 1 mM ZnCl(2). Conformational switching between open (catalytically active) and closed (catalytically inactive) conformation of this protein is suggested mechanism of its regulation. The signal or inducer of the conformational shift to the open form unmasking the active site is currently not understood. Its function is as follows. Cell wall peptidoglycan (PG) DD-endopeptidase essential for cell growth and elongation. Hydrolyzes peptide cross-links which covalently connect adjacent PG strands probably to allow insertion of new glycans and thus cell wall expansion. Degrades purified whole PG sacculi in vitro. Releases predominantly short glycan chains from the PG. Cleaves D,D cross-linked muropeptides specifically preferring dimeric tetrapeptide-tetrapeptide (D44) substrates and has only little activity on dimeric tetrapeptide-pentapeptide (D45) substrates. Also converts more than 50% of tetrapeptide-tripeptide (D43) to product as well as more than 50% of D43M, which contains D-Met instead of D-Ala in the fourth position of the acceptor moiety. Cleaves the D,D bond between diaminopimelic acid (DAP) and D-Ala of the PG substrate in vitro. No cleavage of L,D bond connecting two DAP moieties. The protein is Peptidoglycan DD-endopeptidase ShyA of Vibrio cholerae serotype O1 (strain ATCC 39315 / El Tor Inaba N16961).